Here is a 238-residue protein sequence, read N- to C-terminus: uncharacterized protein (238 aa).

The next 3 helical transmembrane spans lie at 75-95, 116-136, and 172-192; these read YAIF…HNFY, IVLI…FSLI, and IQGL…LEVI. A disordered region spans residues 200 to 238; it reads DVEMSSMRGQAITTEPASDNTMAEETDCNTSKDVESGSN. The segment covering 206-220 has biased composition (polar residues); sequence MRGQAITTEPASDNT. Over residues 229 to 238 the composition is skewed to basic and acidic residues; the sequence is TSKDVESGSN.

Its subcellular location is the membrane. This is an uncharacterized protein from Schizosaccharomyces pombe (strain 972 / ATCC 24843) (Fission yeast).